Here is a 407-residue protein sequence, read N- to C-terminus: Probable tRNA sulfurtransferase (407 aa).

In terms of domain architecture, THUMP spans 61 to 165 (NEITNRLSKI…LDAIYMYEEV (105 aa)). ATP is bound by residues 183 to 184 (ML), 208 to 209 (HF), arginine 265, glycine 287, and glutamine 296.

This sequence belongs to the ThiI family.

The protein localises to the cytoplasm. The catalysed reaction is [ThiI sulfur-carrier protein]-S-sulfanyl-L-cysteine + a uridine in tRNA + 2 reduced [2Fe-2S]-[ferredoxin] + ATP + H(+) = [ThiI sulfur-carrier protein]-L-cysteine + a 4-thiouridine in tRNA + 2 oxidized [2Fe-2S]-[ferredoxin] + AMP + diphosphate. The enzyme catalyses [ThiS sulfur-carrier protein]-C-terminal Gly-Gly-AMP + S-sulfanyl-L-cysteinyl-[cysteine desulfurase] + AH2 = [ThiS sulfur-carrier protein]-C-terminal-Gly-aminoethanethioate + L-cysteinyl-[cysteine desulfurase] + A + AMP + 2 H(+). The protein operates within cofactor biosynthesis; thiamine diphosphate biosynthesis. Functionally, catalyzes the ATP-dependent transfer of a sulfur to tRNA to produce 4-thiouridine in position 8 of tRNAs, which functions as a near-UV photosensor. Also catalyzes the transfer of sulfur to the sulfur carrier protein ThiS, forming ThiS-thiocarboxylate. This is a step in the synthesis of thiazole, in the thiamine biosynthesis pathway. The sulfur is donated as persulfide by IscS. This chain is Probable tRNA sulfurtransferase, found in Staphylococcus aureus (strain MRSA252).